Consider the following 577-residue polypeptide: Hemagglutinin-neuraminidase (577 aa).

The Intravirion segment spans residues 1-26; that stretch reads MDRAVSQVALENDEREAKNTWRLIFR. Residues 27–47 form a helical membrane-spanning segment; sequence IAILFLTVVTLAISVASLLYS. Residues 48–577 lie on the Virion surface side of the membrane; the sequence is MGASTPSDLV…DDGVREARSG (530 aa). N-linked (GlcNAc...) asparagine; by host glycosylation is present at asparagine 119. Positions 124–152 are important for interaction with fusion/F protein; sequence GAPIHDPDYIGGIGKELIVDDASDVTSFY. 3 disulfide bridges follow: cysteine 172-cysteine 196, cysteine 186-cysteine 247, and cysteine 238-cysteine 251. Residues 234–239 are involved in neuraminidase activity; it reads NRKSCS. N-linked (GlcNAc...) asparagine; by host glycans are attached at residues asparagine 341 and asparagine 433. Intrachain disulfides connect cysteine 344–cysteine 461 and cysteine 455–cysteine 465. Residues asparagine 481 and asparagine 538 are each glycosylated (N-linked (GlcNAc...) asparagine; by host). Cysteine 531 and cysteine 542 are joined by a disulfide.

This sequence belongs to the paramyxoviruses hemagglutinin-neuraminidase family. As to quaternary structure, homotetramer; composed of disulfide-linked homodimers. Interacts with F protein trimer. Interacts with host CG-1B; this interaction inhibits viral adsorption and replication rather than internalization.

The protein resides in the virion membrane. It localises to the host cell membrane. It carries out the reaction Hydrolysis of alpha-(2-&gt;3)-, alpha-(2-&gt;6)-, alpha-(2-&gt;8)- glycosidic linkages of terminal sialic acid residues in oligosaccharides, glycoproteins, glycolipids, colominic acid and synthetic substrates.. Mediates the viral entry into the host cell together with fusion/F protein. Attaches the virus to sialic acid-containing cell receptors and thereby initiates infection. Binding of HN protein to the receptor induces a conformational change that allows the F protein to trigger virion/cell membranes fusion. In terms of biological role, neuraminidase activity ensures the efficient spread of the virus by dissociating the mature virions from the neuraminic acid containing glycoproteins. This is Hemagglutinin-neuraminidase (HN) from Newcastle disease virus (strain Chicken/United States/LaSota/46) (NDV).